A 516-amino-acid polypeptide reads, in one-letter code: Multicopper oxidase CueO (516 aa).

Residues 1–28 (MQRRDFLKYSVALGVASALPLWSRAVFA) constitute a signal peptide (tat-type signal). 2 consecutive Plastocyanin-like domains span residues 55-165 (GQST…IEDD) and 227-292 (PRGW…DNKP). The Cu cation site is built by histidine 101, histidine 103, histidine 141, and histidine 143. Residues 355 to 400 (MDPMLDMMGMQMLMEKYGDQAMAGMDHSQMMGHMGHGNMNHMNHGG) are methionine-rich region. Residues 402–516 (FDFHHANKIN…DTGMMLGFTV (115 aa)) enclose the Plastocyanin-like 3 domain. The Cu cation site is built by histidine 443, histidine 446, histidine 448, histidine 499, cysteine 500, histidine 501, and histidine 505.

It belongs to the multicopper oxidase family. Monomer. Cu cation serves as cofactor. Post-translationally, exported by the Tat system. The position of the signal peptide cleavage has been experimentally proven.

Its subcellular location is the periplasm. The catalysed reaction is 4 Cu(+) + O2 + 4 H(+) = 4 Cu(2+) + 2 H2O. Ferroxidase and phenoloxidase activities are enhanced considerably in the presence of excess copper ions. A labile regulatory copper ion near the T1 copper site is important for the copper associated activation of enzyme activity. Ag(+) acts as a potent inhibitor of oxidase activity by binding at Cu(+) binding sites, blocking Cu(+) substrate binding and oxidation. pPD oxidase activity is strongly inhibited by sodium azide, an inhibitor of the electron transfer. Its function is as follows. Multicopper oxidase involved in copper homeostasis and copper tolerance under aerobic conditions. Is responsible for the oxidation of Cu(+) to the less harmful Cu(2+) in the periplasm, thereby preventing Cu(+) from entering the cytoplasm. Probably primarily functions as a cuprous oxidase in vivo. In terms of biological role, in vitro, in the presence of excess copper ions, exhibits ferroxidase and phenoloxidase activities. Fe(2+) is an excellent substrate in the presence of excess Cu(2+), but is inactive in the absence of Cu(2+). Oxidizes the phenolate iron siderophores enterobactin, 2,3-dihydroxybenzoate (2,3-DHB) and 3-hydroxyanthranilate (3-HAA). Oxidation and thus inactivation of enterobactin could protect cells from the interaction of enterobactin with copper and play a central role as an interface between copper detoxification and iron homeostasis. Also oxidizes a variety of phenolic model substrates, including 2,2'-azinobis(3-ethylbenzthiazolinesulfonic acid) (ABTS), p-phenylenediamine (pPD), 2,6-dimethoxyphenol (2,6-DMP) and 3,4-dihydroxybenzoic acid (3,4-DHB). In Escherichia coli (strain K12), this protein is Multicopper oxidase CueO.